The sequence spans 304 residues: Rhomboid-like protein 19 (304 aa).

The next 6 membrane-spanning stretches (helical) occupy residues 23 to 43 (LVVG…LALI), 58 to 78 (GYFE…LFMG), 93 to 113 (FIFV…IALY), 120 to 140 (VYLY…LVGI), 158 to 175 (WLPS…FFTL), and 179 to 198 (AYLP…LRYL). The tract at residues 247 to 304 (SEDHDYSTSGAPLPGSDSAEASRRRERGARALEERLGTERLVPARNKDELQSDGLDNV) is disordered. Residues 266 to 284 (EASRRRERGARALEERLGT) show a composition bias toward basic and acidic residues.

It belongs to the peptidase S54 family.

Its subcellular location is the membrane. Its function is as follows. Probable rhomboid-type serine protease that catalyzes intramembrane proteolysis. The sequence is that of Rhomboid-like protein 19 from Arabidopsis thaliana (Mouse-ear cress).